Reading from the N-terminus, the 185-residue chain is Ribosome maturation factor RimM (185 aa).

Positions 103 to 177 (SEEYYWYEIL…SIIVKKIEWY (75 aa)) constitute a PRC barrel domain.

This sequence belongs to the RimM family. Binds ribosomal protein uS19.

The protein localises to the cytoplasm. Its function is as follows. An accessory protein needed during the final step in the assembly of 30S ribosomal subunit, possibly for assembly of the head region. Essential for efficient processing of 16S rRNA. May be needed both before and after RbfA during the maturation of 16S rRNA. It has affinity for free ribosomal 30S subunits but not for 70S ribosomes. The protein is Ribosome maturation factor RimM of Petrotoga mobilis (strain DSM 10674 / SJ95).